The primary structure comprises 449 residues: tRNA-2-methylthio-N(6)-dimethylallyladenosine synthase (449 aa).

One can recognise an MTTase N-terminal domain in the interval 4–119; that stretch reads RTFHIETFGC…APQALDRLVE (116 aa). [4Fe-4S] cluster contacts are provided by Cys-13, Cys-48, Cys-82, Cys-158, Cys-162, and Cys-165. Residues 144 to 375 enclose the Radical SAM core domain; that stretch reads GAVPASVFVN…QTLQNRLTER (232 aa). Residues 378–446 enclose the TRAM domain; it reads QDMVGKKVEV…KHSLLAEQAG (69 aa).

The protein belongs to the methylthiotransferase family. MiaB subfamily. In terms of assembly, monomer. Requires [4Fe-4S] cluster as cofactor.

The protein localises to the cytoplasm. It carries out the reaction N(6)-dimethylallyladenosine(37) in tRNA + (sulfur carrier)-SH + AH2 + 2 S-adenosyl-L-methionine = 2-methylsulfanyl-N(6)-dimethylallyladenosine(37) in tRNA + (sulfur carrier)-H + 5'-deoxyadenosine + L-methionine + A + S-adenosyl-L-homocysteine + 2 H(+). Catalyzes the methylthiolation of N6-(dimethylallyl)adenosine (i(6)A), leading to the formation of 2-methylthio-N6-(dimethylallyl)adenosine (ms(2)i(6)A) at position 37 in tRNAs that read codons beginning with uridine. The protein is tRNA-2-methylthio-N(6)-dimethylallyladenosine synthase of Nitratidesulfovibrio vulgaris (strain DP4) (Desulfovibrio vulgaris).